The sequence spans 143 residues: Histone H2AX (143 aa).

A disordered region spans residues 1–22 (MSGRGKTGGKARAKAKSRSSRA). Ser-2 bears the N-acetylserine mark. A Phosphoserine modification is found at Ser-2. 2 positions are modified to N6-acetyllysine: Lys-6 and Lys-10. The span at 7-19 (TGGKARAKAKSRS) shows a compositional bias: basic residues. An N6-lactoyllysine; alternate modification is found at Lys-10. Glycyl lysine isopeptide (Lys-Gly) (interchain with G-Cter in ubiquitin) cross-links involve residues Lys-14 and Lys-16. Lys-37 carries the N6-acetyllysine modification. Lys-120 participates in a covalent cross-link: Glycyl lysine isopeptide (Lys-Gly) (interchain with G-Cter in ubiquitin). Residues 121–143 (TSATVGPKAPSGGKKATQASQEY) are disordered. Ser-122 carries the phosphoserine modification. Glycyl lysine isopeptide (Lys-Gly) (interchain with G-Cter in SUMO2) cross-links involve residues Lys-128 and Lys-135. Ser-140 is subject to Phosphoserine; by ATM, ATR and PRKDC. Positions 140-141 (SQ) match the [ST]-Q motif motif. Residue Tyr-143 is modified to Phosphotyrosine; by WSTF.

It belongs to the histone H2A family. The nucleosome is a histone octamer containing two molecules each of H2A, H2B, H3 and H4 assembled in one H3-H4 heterotetramer and two H2A-H2B heterodimers. The octamer wraps approximately 147 bp of DNA. Interacts with numerous proteins required for DNA damage signaling and repair when phosphorylated on Ser-140. These include MDC1, TP53BP1, BRCA1 and the MRN complex, composed of MRE11, RAD50, and NBN. Interaction with the MRN complex is mediated at least in part by NBN. Also interacts with DHX9/NDHII when phosphorylated on Ser-140 and MCPH1 when phosphorylated at Ser-140 or Tyr-143. Interacts with ARRB2; the interaction is detected in the nucleus upon OR1D2 stimulation. Interacts with WRAP53/TCAB1. Interacts with HDGFL2. Interacts with DNA damage up-regulated protein DDUP. Forms a complex with DDUP and RAD18 following DDUP phosphorylation. In terms of assembly, (Microbial infection) Interacts with Epstein-Barr virus protein EBNA6. Post-translationally, phosphorylated by VRK1. Phosphorylated on Ser-140 (to form gamma-H2AX or H2AX139ph) in response to DNA double strand breaks (DSBs) generated by exogenous genotoxic agents and by stalled replication forks, and may also occur during meiotic recombination events and immunoglobulin class switching in lymphocytes. Phosphorylation can extend up to several thousand nucleosomes from the actual site of the DSB and may mark the surrounding chromatin for recruitment of proteins required for DNA damage signaling and repair. Widespread phosphorylation may also serve to amplify the damage signal or aid repair of persistent lesions. Phosphorylation of Ser-140 (H2AX139ph) in response to ionizing radiation is mediated by both ATM and PRKDC while defects in DNA replication induce Ser-140 phosphorylation (H2AX139ph) subsequent to activation of ATR and PRKDC. Dephosphorylation of Ser-140 by PP2A is required for DNA DSB repair. In meiosis, Ser-140 phosphorylation (H2AX139ph) may occur at synaptonemal complexes during leptotene as an ATM-dependent response to the formation of programmed DSBs by SPO11. Ser-140 phosphorylation (H2AX139ph) may subsequently occurs at unsynapsed regions of both autosomes and the XY bivalent during zygotene, downstream of ATR and BRCA1 activation. Ser-140 phosphorylation (H2AX139ph) may also be required for transcriptional repression of unsynapsed chromatin and meiotic sex chromosome inactivation (MSCI), whereby the X and Y chromosomes condense in pachytene to form the heterochromatic XY-body. During immunoglobulin class switch recombination in lymphocytes, Ser-140 phosphorylation (H2AX139ph) may occur at sites of DNA-recombination subsequent to activation of the activation-induced cytidine deaminase AICDA. Phosphorylation at Tyr-143 (H2AXY142ph) by BAZ1B/WSTF determines the relative recruitment of either DNA repair or pro-apoptotic factors. Phosphorylation at Tyr-143 (H2AXY142ph) favors the recruitment of APBB1/FE65 and pro-apoptosis factors such as MAPK8/JNK1, triggering apoptosis. In contrast, dephosphorylation of Tyr-143 by EYA proteins (EYA1, EYA2, EYA3 or EYA4) favors the recruitment of MDC1-containing DNA repair complexes to the tail of phosphorylated Ser-140 (H2AX139ph). In terms of processing, monoubiquitination of Lys-120 (H2AXK119ub) by RING1 and RNF2/RING2 complex gives a specific tag for epigenetic transcriptional repression. Following DNA double-strand breaks (DSBs), it is ubiquitinated through 'Lys-63' linkage of ubiquitin moieties by the E2 ligase UBE2N and the E3 ligases RNF8 and RNF168, leading to the recruitment of repair proteins to sites of DNA damage. Ubiquitination at Lys-14 and Lys-16 (H2AK13Ub and H2AK15Ub, respectively) in response to DNA damage is initiated by RNF168 that mediates monoubiquitination at these 2 sites, and 'Lys-63'-linked ubiquitin are then conjugated to monoubiquitin; RNF8 is able to extend 'Lys-63'-linked ubiquitin chains in vitro. H2AK119Ub and ionizing radiation-induced 'Lys-63'-linked ubiquitination (H2AK13Ub and H2AK15Ub) are distinct events. Acetylation at Lys-6 (H2AXK5ac) by KAT5 component of the NuA4 histone acetyltransferase complex promotes NBN/NBS1 assembly at the sites of DNA damage. Acetylation at Lys-37 increases in S and G2 phases. This modification has been proposed to play a role in DNA double-strand break repair.

It localises to the nucleus. The protein resides in the chromosome. Its function is as follows. Variant histone H2A which replaces conventional H2A in a subset of nucleosomes. Nucleosomes wrap and compact DNA into chromatin, limiting DNA accessibility to the cellular machineries which require DNA as a template. Histones thereby play a central role in transcription regulation, DNA repair, DNA replication and chromosomal stability. DNA accessibility is regulated via a complex set of post-translational modifications of histones, also called histone code, and nucleosome remodeling. Required for checkpoint-mediated arrest of cell cycle progression in response to low doses of ionizing radiation and for efficient repair of DNA double strand breaks (DSBs) specifically when modified by C-terminal phosphorylation. This is Histone H2AX from Homo sapiens (Human).